A 57-amino-acid chain; its full sequence is Large ribosomal subunit protein bL32 (57 aa).

It belongs to the bacterial ribosomal protein bL32 family.

In Geobacillus sp. (strain WCH70), this protein is Large ribosomal subunit protein bL32.